The following is a 261-amino-acid chain: uncharacterized protein (261 aa).

Glu46 is a catalytic residue.

The protein belongs to the PhzF family.

This is an uncharacterized protein from Pseudomonas aeruginosa (strain ATCC 15692 / DSM 22644 / CIP 104116 / JCM 14847 / LMG 12228 / 1C / PRS 101 / PAO1).